The following is a 506-amino-acid chain: Probable lipid II flippase MurJ (506 aa).

A run of 13 helical transmembrane segments spans residues 4 to 24 (YVVS…MGFV), 86 to 106 (TVIT…IIFA), 127 to 147 (VFGY…FVSV), 153 to 173 (IFFI…LSIF), 181 to 201 (IYSA…IPFA), 232 to 252 (IFGF…ASTL), 263 to 283 (AVVY…TVIF), 308 to 328 (ILLL…DYIL), 345 to 365 (TASV…FGFF), 377 to 397 (TPFY…VFGI), 405 to 425 (LALA…FIIL), 436 to 456 (ILFV…IYFF), and 474 to 494 (LMAA…VLGI).

Belongs to the MurJ/MviN family.

Its subcellular location is the cell inner membrane. The protein operates within cell wall biogenesis; peptidoglycan biosynthesis. Its function is as follows. Involved in peptidoglycan biosynthesis. Transports lipid-linked peptidoglycan precursors from the inner to the outer leaflet of the cytoplasmic membrane. This is Probable lipid II flippase MurJ from Borreliella burgdorferi (strain ATCC 35210 / DSM 4680 / CIP 102532 / B31) (Borrelia burgdorferi).